The chain runs to 479 residues: Zinc metalloproteinase/disintegrin (479 aa).

The signal sequence occupies residues 1–20 (MIQVLLVTICLAAFPYQGSS). Positions 21–187 (IILESGKVND…PIKKASQLIV (167 aa)) are excised as a propeptide. The Peptidase M12B domain maps to 193–390 (RYMEIVIVVD…ENPPCILNKP (198 aa)). Ca(2+)-binding residues include glutamate 196 and aspartate 280. Disulfide bonds link cysteine 304/cysteine 385, cysteine 344/cysteine 369, and cysteine 346/cysteine 352. Histidine 329 lines the Zn(2+) pocket. The active site involves glutamate 330. Zn(2+) is bound by residues histidine 333 and histidine 339. The Ca(2+) site is built by cysteine 385 and asparagine 388. The propeptide occupies 390–414 (PLRTDTVSTPVSGNELLEAGKDYDR). Positions 398 to 479 (TPVSGNELLE…ADCPRNPYHA (82 aa)) constitute a Disintegrin domain. Intrachain disulfides connect cysteine 435/cysteine 441, cysteine 440/cysteine 465, and cysteine 453/cysteine 472. The Cell attachment site signature appears at 457 to 459 (RGD).

This sequence belongs to the venom metalloproteinase (M12B) family. P-II subfamily. P-IIa sub-subfamily. In terms of assembly, monomer. It depends on Zn(2+) as a cofactor. Expressed by the venom gland.

It is found in the secreted. In terms of biological role, snake venom metalloproteinase that impairs hemostasis in the envenomed animal. Inhibits platelet aggregation induced by ADP, thrombin, platelet-activating factor and collagen. Acts by inhibiting fibrinogen interaction with platelet receptors GPIIb/GPIIIa (ITGA2B/ITGB3). The sequence is that of Zinc metalloproteinase/disintegrin from Deinagkistrodon acutus (Hundred-pace snake).